The sequence spans 314 residues: Olfactory receptor 51G2 (314 aa).

Over 1 to 30 (MTLGSLGNSSSSVSATFLLSGIPGLERMHI) the chain is Extracellular. Residue Asn8 is glycosylated (N-linked (GlcNAc...) asparagine). The helical transmembrane segment at 31 to 51 (WISIPLCFMYLVSIPGNCTIL) threads the bilayer. Over 52-59 (FIIKTERS) the chain is Cytoplasmic. The chain crosses the membrane as a helical span at residues 60 to 80 (LHEPMYLFLSMLALIDLGLSL). Topologically, residues 81–104 (CTLPTVLGIFWVGAREISHDACFA) are extracellular. Cys102 and Cys194 are oxidised to a cystine. Residues 105 to 125 (QLFFIHCFSFLESSVLLSMAF) form a helical membrane-spanning segment. Topologically, residues 126–144 (DRFVAICHPLHYVSILTNT) are cytoplasmic. Residues 145–165 (VIGRIGLVSLGRSVALIFPLP) form a helical membrane-spanning segment. Residues 166–201 (FMLKRFPYCGSPVLSHSYCLHQEVMKLACADMKANS) are Extracellular-facing. The chain crosses the membrane as a helical span at residues 202–222 (IYGMFVIVSTVGIDSLLILFS). Residues 223–242 (YALILRTVLSIASRAERFKA) are Cytoplasmic-facing. Residues 243-263 (LNTCVSHICAVLLFYTPMIGL) traverse the membrane as a helical segment. The Extracellular portion of the chain corresponds to 264–278 (SVIHRFGKQAPHLVQ). Residues 279 to 299 (VVMGFMYLLFPPVMNPIVYSV) form a helical membrane-spanning segment. Over 300–314 (KTKQIRDRVTHAFCY) the chain is Cytoplasmic.

This sequence belongs to the G-protein coupled receptor 1 family.

It is found in the cell membrane. In terms of biological role, odorant receptor. This is Olfactory receptor 51G2 (OR51G2) from Homo sapiens (Human).